An 89-amino-acid chain; its full sequence is UPF0147 protein Msed_2034 (89 aa).

Belongs to the UPF0147 family.

This chain is UPF0147 protein Msed_2034, found in Metallosphaera sedula (strain ATCC 51363 / DSM 5348 / JCM 9185 / NBRC 15509 / TH2).